The chain runs to 122 residues: Glycine cleavage system H protein (122 aa).

Positions 19–101 (TATIGITKHA…EGNSWLYKIK (83 aa)) constitute a Lipoyl-binding domain. Lysine 60 is subject to N6-lipoyllysine.

It belongs to the GcvH family. The glycine cleavage system is composed of four proteins: P, T, L and H. (R)-lipoate is required as a cofactor.

Functionally, the glycine cleavage system catalyzes the degradation of glycine. The H protein shuttles the methylamine group of glycine from the P protein to the T protein. The protein is Glycine cleavage system H protein of Dinoroseobacter shibae (strain DSM 16493 / NCIMB 14021 / DFL 12).